Here is a 263-residue protein sequence, read N- to C-terminus: Leukocyte-associated immunoglobulin-like receptor 1 (263 aa).

An N-terminal signal peptide occupies residues 1–21 (MSLHPVILLVLVLCLGWKINT). The Extracellular portion of the chain corresponds to 22–144 (QEGSLPDITI…TSWLKTYSIY (123 aa)). One can recognise an Ig-like C2-type domain in the interval 27 to 115 (PDITIFPNSS…TWSERSKTLE (89 aa)). Residues Asn34 and Asn90 are each glycosylated (N-linked (GlcNAc...) asparagine). Residues Cys49 and Cys99 are joined by a disulfide bond. The chain crosses the membrane as a helical span at residues 145–165 (IFTVVSVIFLLCLSALLFCFL). The Cytoplasmic portion of the chain corresponds to 166 to 263 (RHRQKKQGLP…SSTYAAIIRH (98 aa)). 2 consecutive short sequence motifs (ITIM motif) follow at residues 226–231 (VTYIQL) and 255–260 (STYAAI). Residues Tyr228 and Tyr257 each carry the phosphotyrosine modification.

Interacts with SH2 domains of tyrosine-protein phosphatases PTPN6 and PTPN11. The interaction with PTPN6 is constitutive. Interacts with the SH2 domain of CSK. Binds with high affinity to extracellular matrix collagens, the interaction is functionally important. Phosphorylation at Tyr-228 and Tyr-257 activates it. May be phosphorylated by LCK. In terms of processing, N-glycosylated. As to expression, expressed in lymphoid organs and in cell lines of hemopoietic origin.

It localises to the cell membrane. Functions as an inhibitory receptor that plays a constitutive negative regulatory role on cytolytic function of natural killer (NK) cells, B-cells and T-cells. Activation by Tyr phosphorylation results in recruitment and activation of the phosphatases PTPN6 and PTPN11. It also reduces the increase of intracellular calcium evoked by B-cell receptor ligation. May also play its inhibitory role independently of SH2-containing phosphatases. Modulates cytokine production in CD4+ T-cells, down-regulating IL2 and IFNG production while inducing secretion of transforming growth factor beta. Also down-regulates IgG and IgE production in B-cells as well as IL8, IL10 and TNF secretion. Inhibits proliferation and induces apoptosis in myeloid leukemia cell lines as well as prevents nuclear translocation of NF-kappa-B p65 subunit/RELA and phosphorylation of I-kappa-B alpha/CHUK in these cells. Inhibits the differentiation of peripheral blood precursors towards dendritic cells. The protein is Leukocyte-associated immunoglobulin-like receptor 1 (Lair1) of Mus musculus (Mouse).